Here is a 1040-residue protein sequence, read N- to C-terminus: Nucleotide-binding oligomerization domain-containing protein 2 (1040 aa).

CARD domains are found at residues 26 to 122 (CEMC…LHGC) and 126 to 218 (HSLH…EAAT). An ATG16L1-binding motif motif is present at residues 63–77 (WEVLSWEDYEGFHLL). Positions 239, 252, 253, 302, 303, 304, 305, 306, and 307 each coordinate ADP. Positions 241-274 (DGAETLCLEDIYTENVLEVWADVGMAGPPQKSPA) are required for CARD9 binding. Positions 293–618 (DTVLVVGEAG…FFAAFYLALS (326 aa)) constitute an NACHT domain. 299-306 (GEAGSGKS) is an ATP binding site. Residue C395 is the site of S-palmitoyl cysteine attachment. H603 is an ADP binding site. LRR repeat units lie at residues 791–812 (RPVALQLDYNSVGDIGVEQLLP), 816–839 (VCKALYLRDNNISDRGICKLIECA), 844–865 (QLQKLALFNNKLTDGCAHSMAK), 872–884 (NFLALRLGNNYIT), 900–920 (SLQFLGFWGNRVGDEGAQALA), 928–949 (SLRWLSLVGNNIGSVGAQALAL), 956–976 (MLEELCLEENHLQDEGVCSLA), 984–1005 (SLKILKLSNNCITYLGAEALLQ), and 1012–1032 (TILEVWLRGNTFSLEEVDKLG). C1033 carries S-palmitoyl cysteine lipidation.

The protein belongs to the NOD1-NOD2 family. Homooligomer: homooligomerizes following muramyl dipeptide (MDP)-binding, promoting RIPK2 recruitment. Interacts (via CARD domain) with RIPK2 (via CARD domain). Following RIPK2 recruitment, RIPK2 homooligomerizes via its CARD domain and forms long filaments named RIPosomes. Interacts (via CARD domain) with ubiquitin; inhibiting interaction with RIPK2. Component of a signaling complex consisting of ARHGEF2, NOD2 and RIPK2. Interacts with ANKRD17 (via N-terminus). Interacts with HSPA1A; the interaction enhances NOD2 stability. Interacts (via both CARD domains) with HSP90; the interaction enhances NOD2 stability. Interacts (via CARD domain) with SOCS3; the interaction promotes NOD2 degradation. Interacts (via CARD domain) with ERBIN; the interaction inhibits activation of NOD2. Interacts with MAPKBP1; the interaction is enhanced in the presence of muramyl dipeptide (MDP) and inhibits NOD2 homooligomerization and activation. Interacts with INAVA; the interaction takes place upon Pattern recognition receptor (PRR) stimulation. Interacts (via NACHT domain) with CARD9. Interacts (via CARD domain) with CASP1; this interaction leads to IL1B processing. Also interacts with CASP4. Interacts with NLRP1; this interaction is enhanced in the presence of muramyl dipeptide (MDP) and leads to increased IL1B release. Interacts with NLRP12; this interaction promotes degradation of NOD2 through the ubiquitin-proteasome pathway. Interacts with ANKHD1, C10orf67, CHMP5, DOCK7, ENTR1, KRT15, LDOC1, PPP1R12C, PPP2R3B, TRIM41 and VIM. Interacts with MAVS; interaction takes place following single-stranded RNA (ssRNA)-binding. Interacts with ATG16L1. Interacts with IRGM; promoting IRGM 'Lys-63'-linked polyubiquitination, which is required for interactions with the core autophagy factors. Palmitoylated by ZDHHC5; palmitoylation is required for proper recruitment to the bacterial entry site and hence for proper signaling upon cognate peptidoglycan detection. Palmitoylation promotes localization to the cell membrane. Palmitoylation protects from SQSTM1/p62-dependent autophagic degradation. Post-translationally, polyubiquitinated by TRIM27, leading to proteasome-mediated degradation. Polyubiquitinated and degraded following muramyl dipeptide (MDP) stimulation, conferring MDP tolerance and preventing septic shock. In terms of processing, degraded via selective autophagy following interaction with IRGM. IRGM promotes NOD2-RIPK2 RIPosome recruitment to autophagosome membranes, promoting their SQSTM1/p62-dependent autophagic degradation. O-glycosylated by OGT, O-GlcNAcylation increases protein stability. As to expression, expressed in monocytes, macrophages, dendritic cells, hepatocytes, preadipocytes, epithelial cells of oral cavity, lung and intestine, with higher expression in ileal Paneth cells and in intestinal stem cells. Expressed at higher level in leukocytes.

The protein resides in the cell membrane. The protein localises to the basolateral cell membrane. Its subcellular location is the cytoplasm. It localises to the mitochondrion. Its activity is regulated as follows. ADP-binding promotes an inactive closed conformation. Pattern recognition receptor (PRR) that detects bacterial peptidoglycan fragments and other danger signals and plays an important role in gastrointestinal immunity. Specifically activated by muramyl dipeptide (MDP), a fragment of bacterial peptidoglycan found in every bacterial peptidoglycan type. NOD2 specifically recognizes and binds 6-O-phospho-MDP, the phosphorylated form of MDP, which is generated by NAGK. 6-O-phospho-MDP-binding triggers oligomerization that facilitates the binding and subsequent activation of the proximal adapter receptor-interacting RIPK2. Following recruitment, RIPK2 undergoes 'Met-1'- (linear) and 'Lys-63'-linked polyubiquitination by E3 ubiquitin-protein ligases XIAP, BIRC2, BIRC3 and the LUBAC complex, becoming a scaffolding protein for downstream effectors, triggering activation of the NF-kappa-B and MAP kinases signaling. This in turn leads to the transcriptional activation of hundreds of genes involved in immune response. Its ability to detect bacterial MDP plays a central role in maintaining the equilibrium between intestinal microbiota and host immune responses to control inflammation. An imbalance in this relationship results in dysbiosis, whereby pathogenic bacteria prevail on commensals, causing damage in the intestinal epithelial barrier as well as allowing bacterial invasion and inflammation. Acts as a regulator of appetite by sensing MDP in a subset of brain neurons: microbiota-derived MDP reach the brain, where they bind and activate NOD2 in inhibitory hypothalamic neurons, decreasing neuronal activity, thereby regulating satiety and body temperature. NOD2-dependent MDP-sensing of bacterial cell walls in the intestinal epithelial compartment contributes to sustained postnatal growth upon undernutrition. Also plays a role in antiviral response by acting as a sensor of single-stranded RNA (ssRNA) from viruses: upon ssRNA-binding, interacts with MAVS, leading to activation of interferon regulatory factor-3/IRF3 and expression of type I interferon. Also acts as a regulator of autophagy in dendritic cells via its interaction with ATG16L1, possibly by recruiting ATG16L1 at the site of bacterial entry. NOD2 activation in the small intestine crypt also contributes to intestinal stem cells survival and function: acts by promoting mitophagy via its association with ATG16L1. In addition to its main role in innate immunity, also regulates the adaptive immune system by acting as regulator of helper T-cell and regulatory T-cells (Tregs). Besides recognizing pathogens, also involved in the endoplasmic reticulum stress response: acts by sensing and binding to the cytosolic metabolite sphingosine-1-phosphate generated in response to endoplasmic reticulum stress, initiating an inflammation process that leads to activation of the NF-kappa-B and MAP kinases signaling. May also be involved in NLRP1 activation following activation by MDP, leading to CASP1 activation and IL1B release in macrophages. Its function is as follows. Acts as a pattern recognition receptor (PRR); able to activate NF-kappa-B. Functionally, can activate NF-kappa-B in a muramyl dipeptide (MDP)-independent manner. This Homo sapiens (Human) protein is Nucleotide-binding oligomerization domain-containing protein 2.